The following is a 224-amino-acid chain: Heme response regulator HssR (224 aa).

The Response regulatory domain occupies 3–116 (QCLVVDDDPR…ELIFRIRAVL (114 aa)). The residue at position 52 (D52) is a 4-aspartylphosphate. The ompR/PhoB-type DNA-binding region spans 124–222 (NSEMTIGNLT…VRGQGYKVEN (99 aa)).

Post-translationally, phosphorylated by HssS.

It localises to the cytoplasm. Functionally, member of the two-component regulatory system HssS/HssR involved in intracellular heme homeostasis and tempering of staphylococcal virulence. Phosphorylated HssR binds to a direct repeat sequence within hrtAB promoter and activates the expression of hrtAB, an efflux pump, in response to extracellular heme, hemin, hemoglobin or blood. This Staphylococcus aureus (strain COL) protein is Heme response regulator HssR (hssR).